The following is a 177-amino-acid chain: MSRVAKSPVEVPAAVTVTLNGQSLSVKGGKGTLALEVHANVEVKHEGNVLTFTPRDGAKQSDALAGTTRALVNNMVVGVSQGFEKKLTLVGVGYRVKAEGNTVNLSLGYSHPVNYVLPQGVSVETPSQTEIVLKSADKQLLGQVAAEIRAFREPEPYKGKGVRYSDEVVLRKEAKKK.

This sequence belongs to the universal ribosomal protein uL6 family. In terms of assembly, part of the 50S ribosomal subunit.

Functionally, this protein binds to the 23S rRNA, and is important in its secondary structure. It is located near the subunit interface in the base of the L7/L12 stalk, and near the tRNA binding site of the peptidyltransferase center. This Cellvibrio japonicus (strain Ueda107) (Pseudomonas fluorescens subsp. cellulosa) protein is Large ribosomal subunit protein uL6.